Here is an 810-residue protein sequence, read N- to C-terminus: Oligoxyloglucan-reducing end-specific xyloglucanase (810 aa).

Positions 1 to 28 (MRAKNGPGSWLALTAIATSLNTLALAAA) are cleaved as a signal peptide. Residue Asn-32 is glycosylated (N-linked (GlcNAc...) asparagine). Asp-66 serves as the catalytic Nucleophile. Residues 126 to 135 (FVSQDRGATF) form a BNR 1 repeat. A glycan (N-linked (GlcNAc...) asparagine) is linked at Asn-188. The BNR 2 repeat unit spans residues 226 to 236 (YVTRDSGESWE). Residues Asn-298, Asn-312, and Asn-321 are each glycosylated (N-linked (GlcNAc...) asparagine). A BNR 3 repeat occupies 359–369 (YLSHDGGKSWK). A glycan (N-linked (GlcNAc...) asparagine) is linked at Asn-455. The Proton donor role is filled by Asp-498. Asn-544 carries N-linked (GlcNAc...) asparagine glycosylation. The stretch at 554-564 (YSADGGSSWTK) is one BNR 4 repeat. Asn-573 and Asn-612 each carry an N-linked (GlcNAc...) asparagine glycan. The BNR 5 repeat unit spans residues 617–626 (YVTTDLGQTW). N-linked (GlcNAc...) asparagine glycosylation occurs at Asn-638. BNR repeat units follow at residues 658-667 (YLSRDGGLSY), 705-716 (YHTRNFGKKWTK), and 759-769 (YRSDDNGKTWV).

Belongs to the glycosyl hydrolase 74 family.

Its subcellular location is the secreted. The catalysed reaction is Hydrolysis of cellobiose from the reducing end of xyloglucans consisting of a beta-(1-&gt;4)-linked glucan carrying alpha-D-xylosyl groups on O-6 of the glucose residues. To be a substrate, the first residue must be unsubstituted, the second residue may bear a xylosyl group, whether further glycosylated or not, and the third residue, which becomes the new terminus by the action of the enzyme, is preferably xylosylated, but this xylose residue must not be further substituted.. Its function is as follows. Oligoxyloglucan-reducing end-specific xyloglucanase involved in degradation of xyloglucans. Releases the first two glycosyl segments from oligoxyloglucans. Active against cotton xyloglucan, tamarind xyloglucan and tamarind xyloglucan oligomers. The protein is Oligoxyloglucan-reducing end-specific xyloglucanase (xgcA) of Emericella nidulans (strain FGSC A4 / ATCC 38163 / CBS 112.46 / NRRL 194 / M139) (Aspergillus nidulans).